Consider the following 244-residue polypeptide: 6-carboxyhexanoate--CoA ligase (244 aa).

It belongs to the BioW family. In terms of assembly, homodimer. It depends on Mg(2+) as a cofactor.

It carries out the reaction heptanedioate + ATP + CoA = 6-carboxyhexanoyl-CoA + AMP + diphosphate. Its pathway is metabolic intermediate metabolism; pimeloyl-CoA biosynthesis; pimeloyl-CoA from pimelate: step 1/1. Functionally, catalyzes the transformation of pimelate into pimeloyl-CoA with concomitant hydrolysis of ATP to AMP. The polypeptide is 6-carboxyhexanoate--CoA ligase (Methanococcus maripaludis (strain C6 / ATCC BAA-1332)).